The primary structure comprises 383 residues: Succinyl-diaminopimelate desuccinylase (383 aa).

Residue H73 participates in Zn(2+) binding. D75 is a catalytic residue. D107 provides a ligand contact to Zn(2+). E141 serves as the catalytic Proton acceptor. Residues E142, E170, and H356 each contribute to the Zn(2+) site.

The protein belongs to the peptidase M20A family. DapE subfamily. Homodimer. The cofactor is Zn(2+). It depends on Co(2+) as a cofactor.

It catalyses the reaction N-succinyl-(2S,6S)-2,6-diaminopimelate + H2O = (2S,6S)-2,6-diaminopimelate + succinate. It participates in amino-acid biosynthesis; L-lysine biosynthesis via DAP pathway; LL-2,6-diaminopimelate from (S)-tetrahydrodipicolinate (succinylase route): step 3/3. In terms of biological role, catalyzes the hydrolysis of N-succinyl-L,L-diaminopimelic acid (SDAP), forming succinate and LL-2,6-diaminopimelate (DAP), an intermediate involved in the bacterial biosynthesis of lysine and meso-diaminopimelic acid, an essential component of bacterial cell walls. The protein is Succinyl-diaminopimelate desuccinylase of Pseudomonas syringae pv. tomato (strain ATCC BAA-871 / DC3000).